A 296-amino-acid polypeptide reads, in one-letter code: Light-independent protochlorophyllide reductase iron-sulfur ATP-binding protein (296 aa).

Residues 10-15 (GIGKST) and Lys39 contribute to the ATP site. Residue Ser14 participates in Mg(2+) binding. Residues Cys95 and Cys129 each contribute to the [4Fe-4S] cluster site. 180–181 (NR) contributes to the ATP binding site.

It belongs to the NifH/BchL/ChlL family. Homodimer. Protochlorophyllide reductase is composed of three subunits; ChlL, ChlN and ChlB. The cofactor is [4Fe-4S] cluster.

It is found in the plastid. Its subcellular location is the chloroplast. It catalyses the reaction chlorophyllide a + oxidized 2[4Fe-4S]-[ferredoxin] + 2 ADP + 2 phosphate = protochlorophyllide a + reduced 2[4Fe-4S]-[ferredoxin] + 2 ATP + 2 H2O. Its pathway is porphyrin-containing compound metabolism; chlorophyll biosynthesis (light-independent). Component of the dark-operative protochlorophyllide reductase (DPOR) that uses Mg-ATP and reduced ferredoxin to reduce ring D of protochlorophyllide (Pchlide) to form chlorophyllide a (Chlide). This reaction is light-independent. The L component serves as a unique electron donor to the NB-component of the complex, and binds Mg-ATP. The sequence is that of Light-independent protochlorophyllide reductase iron-sulfur ATP-binding protein from Mesostigma viride (Green alga).